Here is a 176-residue protein sequence, read N- to C-terminus: Large ribosomal subunit protein uL10 (176 aa).

It belongs to the universal ribosomal protein uL10 family. In terms of assembly, part of the ribosomal stalk of the 50S ribosomal subunit. The N-terminus interacts with L11 and the large rRNA to form the base of the stalk. The C-terminus forms an elongated spine to which L12 dimers bind in a sequential fashion forming a multimeric L10(L12)X complex.

Forms part of the ribosomal stalk, playing a central role in the interaction of the ribosome with GTP-bound translation factors. The protein is Large ribosomal subunit protein uL10 (rplJ) of Streptomyces coelicolor (strain ATCC BAA-471 / A3(2) / M145).